A 126-amino-acid chain; its full sequence is Aspartate 1-decarboxylase (126 aa).

The active-site Schiff-base intermediate with substrate; via pyruvic acid is the Ser-25. The residue at position 25 (Ser-25) is a Pyruvic acid (Ser). Thr-57 contacts substrate. The Proton donor role is filled by Tyr-58. A substrate-binding site is contributed by 73 to 75 (GAA).

The protein belongs to the PanD family. Heterooctamer of four alpha and four beta subunits. Requires pyruvate as cofactor. Post-translationally, is synthesized initially as an inactive proenzyme, which is activated by self-cleavage at a specific serine bond to produce a beta-subunit with a hydroxyl group at its C-terminus and an alpha-subunit with a pyruvoyl group at its N-terminus.

The protein resides in the cytoplasm. It carries out the reaction L-aspartate + H(+) = beta-alanine + CO2. It participates in cofactor biosynthesis; (R)-pantothenate biosynthesis; beta-alanine from L-aspartate: step 1/1. Functionally, catalyzes the pyruvoyl-dependent decarboxylation of aspartate to produce beta-alanine. In Salmonella arizonae (strain ATCC BAA-731 / CDC346-86 / RSK2980), this protein is Aspartate 1-decarboxylase.